A 207-amino-acid polypeptide reads, in one-letter code: Transcriptional regulatory protein RcsA (207 aa).

An HTH luxR-type domain is found at 131 to 196 (LTLPTLSLSK…VIYHIVRLTE (66 aa)). Positions 155–174 (TSQISTQMNIKAKTVSSHKG) form a DNA-binding region, H-T-H motif.

This sequence belongs to the RcsA family.

Its function is as follows. Component of the Rcs signaling system, which controls transcription of numerous genes. Binds to DNA to regulate expression of genes. In Klebsiella aerogenes (Enterobacter aerogenes), this protein is Transcriptional regulatory protein RcsA.